A 660-amino-acid polypeptide reads, in one-letter code: Pescadillo homolog (660 aa).

Disordered regions lie at residues 313-358 (VESD…SYSS) and 471-660 (PELY…EKKA). Positions 331-342 (EEKPSDAIDKFE) are enriched in basic and acidic residues. Positions 360–476 (DPAQLFSRLT…ELKSPELYGP (117 aa)) constitute a BRCT domain. Positions 501–659 (LEEQQSEGEA…KRRRLEKEKK (159 aa)) form a coiled coil. Positions 504–566 (QQSEGEAIDA…EEGSEDEEES (63 aa)) are enriched in acidic residues. Residues 584 to 619 (VKGDKKMDAKTKAKLEAKKALERKKKSEAEDLERAK) show a composition bias toward basic and acidic residues.

This sequence belongs to the pescadillo family. Component of the NOP7 complex, composed of ERB1, NOP7 and YTM1. The complex is held together by ERB1, which interacts with NOP7 via its N-terminal domain and with YTM1 via a high-affinity interaction between the seven-bladed beta-propeller domains of the 2 proteins. The NOP7 complex associates with the 66S pre-ribosome.

The protein resides in the nucleus. It localises to the nucleolus. Its subcellular location is the nucleoplasm. Component of the NOP7 complex, which is required for maturation of the 25S and 5.8S ribosomal RNAs and formation of the 60S ribosome. The protein is Pescadillo homolog of Chaetomium globosum (strain ATCC 6205 / CBS 148.51 / DSM 1962 / NBRC 6347 / NRRL 1970) (Soil fungus).